The primary structure comprises 94 residues: Large ribosomal subunit protein bL27 (94 aa).

A propeptide spanning residues 1-9 (MLELNLQLF) is cleaved from the precursor. A disordered region spans residues 12–33 (KKGGGSTSNGRDSQAKRLGAKA).

This sequence belongs to the bacterial ribosomal protein bL27 family. The N-terminus is cleaved by ribosomal processing cysteine protease Prp.

This is Large ribosomal subunit protein bL27 from Lactococcus lactis subsp. cremoris (strain MG1363).